A 507-amino-acid chain; its full sequence is Dolichyl pyrophosphate Man9GlcNAc2 alpha-1,3-glucosyltransferase (507 aa).

At M1–E2 the chain is on the cytoplasmic side. Residues S3–L23 form a helical membrane-spanning segment. The Lumenal segment spans residues S24–A114. N59 carries an N-linked (GlcNAc...) asparagine glycan. Residues T115–L135 traverse the membrane as a helical segment. Topologically, residues K136–K143 are cytoplasmic. The helical transmembrane segment at I144 to F164 threads the bilayer. Residues Q165–G172 lie on the Lumenal side of the membrane. Residues F173–F193 traverse the membrane as a helical segment. Topologically, residues C194–A229 are cytoplasmic. A helical membrane pass occupies residues L230 to L250. Topologically, residues T251–Q297 are lumenal. Residues I298–V318 traverse the membrane as a helical segment. At R319–C332 the chain is on the cytoplasmic side. The chain crosses the membrane as a helical span at residues A333 to L353. At P354–E361 the chain is on the lumenal side. The helical transmembrane segment at I362–L382 threads the bilayer. At K383 to E385 the chain is on the cytoplasmic side. The chain crosses the membrane as a helical span at residues L386 to P406. At M407 to R437 the chain is on the lumenal side. The helical transmembrane segment at I438–V458 threads the bilayer. Residues T459–D468 lie on the Cytoplasmic side of the membrane. Residues L469–F489 traverse the membrane as a helical segment. Residues N490–E507 are Lumenal-facing.

This sequence belongs to the ALG6/ALG8 glucosyltransferase family.

Its subcellular location is the endoplasmic reticulum membrane. It carries out the reaction an alpha-D-Man-(1-&gt;2)-alpha-D-Man-(1-&gt;2)-alpha-D-Man-(1-&gt;3)-[alpha-D-Man-(1-&gt;2)-alpha-D-Man-(1-&gt;3)-[alpha-D-Man-(1-&gt;2)-alpha-D-Man-(1-&gt;6)]-alpha-D-Man-(1-&gt;6)]-beta-D-Man-(1-&gt;4)-beta-D-GlcNAc-(1-&gt;4)-alpha-D-GlcNAc-diphospho-di-trans,poly-cis-dolichol + a di-trans,poly-cis-dolichyl beta-D-glucosyl phosphate = an alpha-D-Glc-(1-&gt;3)-alpha-D-Man-(1-&gt;2)-alpha-D-Man-(1-&gt;2)-alpha-D-Man-(1-&gt;3)-[alpha-D-Man-(1-&gt;2)-alpha-D-Man-(1-&gt;3)-[alpha-D-Man-(1-&gt;2)-alpha-D-Man-(1-&gt;6)]-alpha-D-Man-(1-&gt;6)]-beta-D-Man-(1-&gt;4)-beta-D-GlcNAc-(1-&gt;4)-alpha-D-GlcNAc-diphospho-di-trans,poly-cis-dolichol + a di-trans,poly-cis-dolichyl phosphate + H(+). It functions in the pathway protein modification; protein glycosylation. Dolichyl pyrophosphate Man9GlcNAc2 alpha-1,3-glucosyltransferase that operates in the biosynthetic pathway of dolichol-linked oligosaccharides, the glycan precursors employed in protein asparagine (N)-glycosylation. The assembly of dolichol-linked oligosaccharides begins on the cytosolic side of the endoplasmic reticulum membrane and finishes in its lumen. The sequential addition of sugars to dolichol pyrophosphate produces dolichol-linked oligosaccharides containing fourteen sugars, including two GlcNAcs, nine mannoses and three glucoses. Once assembled, the oligosaccharide is transferred from the lipid to nascent proteins by oligosaccharyltransferases. In the lumen of the endoplasmic reticulum, adds the first glucose residue from dolichyl phosphate glucose (Dol-P-Glc) onto the lipid-linked oligosaccharide intermediate Man(9)GlcNAc(2)-PP-Dol to produce Glc(1)Man(9)GlcNAc(2)-PP-Dol. Glc(1)Man(9)GlcNAc(2)-PP-Dol is a substrate for ALG8, the following enzyme in the biosynthetic pathway. The sequence is that of Dolichyl pyrophosphate Man9GlcNAc2 alpha-1,3-glucosyltransferase from Mus musculus (Mouse).